The chain runs to 418 residues: FK506-binding protein 3 (418 aa).

Disordered regions lie at residues 49 to 133, 172 to 273, and 289 to 309; these read PSTL…DDEF, SLTG…ETKK, and LEEG…KPKT. Residues 61-89 show a composition bias toward acidic residues; it reads YDDEDDAGGLLGDYDEDELDISEEEEEEE. The span at 93 to 103 shows a compositional bias: basic residues; it reads KSKKGKGKGKS. 2 stretches are compositionally biased toward acidic residues: residues 108–133 and 186–224; these read EEEE…DDEF and GYDD…DASD. Over residues 225 to 239 the composition is skewed to basic and acidic residues; the sequence is VEAKIQELVEKEQSK. The span at 251-264 shows a compositional bias: acidic residues; sequence PEEEEEEEEEEEEE. The 87-residue stretch at 332-418 folds into the PPIase FKBP-type domain; sequence GSKVGMRYIG…TFDVKLVSLK (87 aa).

This sequence belongs to the FKBP-type PPIase family. FKBP3/4 subfamily.

The protein resides in the nucleus. It is found in the nucleolus. The enzyme catalyses [protein]-peptidylproline (omega=180) = [protein]-peptidylproline (omega=0). Inhibited by both FK506 and rapamycin. Functionally, PPIases accelerate the folding of proteins. It catalyzes the cis-trans isomerization of proline imidic peptide bonds in oligopeptides. The sequence is that of FK506-binding protein 3 (FPR3) from Kluyveromyces lactis (strain ATCC 8585 / CBS 2359 / DSM 70799 / NBRC 1267 / NRRL Y-1140 / WM37) (Yeast).